A 383-amino-acid chain; its full sequence is ATP phosphoribosyltransferase regulatory subunit (383 aa).

Belongs to the class-II aminoacyl-tRNA synthetase family. HisZ subfamily. In terms of assembly, heteromultimer composed of HisG and HisZ subunits.

It is found in the cytoplasm. Its pathway is amino-acid biosynthesis; L-histidine biosynthesis; L-histidine from 5-phospho-alpha-D-ribose 1-diphosphate: step 1/9. Its function is as follows. Required for the first step of histidine biosynthesis. May allow the feedback regulation of ATP phosphoribosyltransferase activity by histidine. The sequence is that of ATP phosphoribosyltransferase regulatory subunit from Neisseria meningitidis serogroup C (strain 053442).